The following is a 159-amino-acid chain: Serine-protein kinase RsbW (159 aa).

This sequence belongs to the anti-sigma-factor family.

It catalyses the reaction L-seryl-[protein] + ATP = O-phospho-L-seryl-[protein] + ADP + H(+). It carries out the reaction L-threonyl-[protein] + ATP = O-phospho-L-threonyl-[protein] + ADP + H(+). In terms of biological role, negative regulator of sigma-B activity. Phosphorylates and inactivates its specific antagonist protein, RsbV. Upon phosphorylation of RsbV, RsbW is released and binds to sigma-B, thereby blocking its ability to form an RNA polymerase holoenzyme (E-sigma-B). This is Serine-protein kinase RsbW from Staphylococcus aureus (strain MRSA252).